A 751-amino-acid chain; its full sequence is uncharacterized protein (751 aa).

Residues 73-169 (FGVVHSHTPK…PVLIDDDTGE (97 aa)) form a disordered region. Over residues 96–109 (ATSTRRSATAQRAA) the composition is skewed to low complexity. Positions 111–120 (LKSSPVDQWS) are enriched in polar residues.

This is an uncharacterized protein from Invertebrate iridescent virus 3 (IIV-3).